The sequence spans 301 residues: Homoserine kinase (301 aa).

Residue 89-99 (KPGSGLGSSSA) participates in ATP binding.

Belongs to the GHMP kinase family. Homoserine kinase subfamily.

It is found in the cytoplasm. It carries out the reaction L-homoserine + ATP = O-phospho-L-homoserine + ADP + H(+). The protein operates within amino-acid biosynthesis; L-threonine biosynthesis; L-threonine from L-aspartate: step 4/5. In terms of biological role, catalyzes the ATP-dependent phosphorylation of L-homoserine to L-homoserine phosphate. This chain is Homoserine kinase, found in Methanococcus maripaludis (strain C5 / ATCC BAA-1333).